The sequence spans 179 residues: Replication restart protein DnaT (179 aa).

Positions 151–168 (SRSSNGGMPQRDINSVSE) are enriched in polar residues. The interval 151 to 179 (SRSSNGGMPQRDINSVSEPDNHIPPGFRG) is disordered.

Belongs to the DnaT family. As to quaternary structure, homooligomerizes. Interacts with PriB. Component of the replication restart primosome. Primosome assembly occurs via a 'hand-off' mechanism. PriA binds to replication forks, subsequently PriB then DnaT bind; DnaT then displaces ssDNA to generate the helicase loading substrate.

In terms of biological role, involved in the restart of stalled replication forks, which reloads the replicative helicase on sites other than the origin of replication. Can function in multiple replication restart pathways. Displaces ssDNA from a PriB-ssDNA complex. Probably forms a spiral filament on ssDNA. This Salmonella schwarzengrund (strain CVM19633) protein is Replication restart protein DnaT.